The primary structure comprises 277 residues: MRTLILLGILGATMSAPLIPQHLMSASNSNELLLNLNNAQLRPLQLQGPFNSWFPPFPGILQQQQQNQVPGLSPFSLSTREWFAGLVPNQIFVPGQVSFAQGTQAGQLDPSQPQTPQQTQRGPKNVMPSVFFKMPQEQAQMLQYYPVYMFLPWEQPQQTVAQSPPQTREQLFEKQMPFYTEFGYIPQQVEPVMPVEQQQPVFDPFLGTAPEIAAMPAEVSPYLQKEMINFQHTNAGIFIPSTSQKPSTTIFFTSAVDPIITRELTEKKAKTDSLKEP.

An N-terminal signal peptide occupies residues 1 to 15 (MRTLILLGILGATMS). Residues 103-124 (TQAGQLDPSQPQTPQQTQRGPK) form a disordered region. Thr115 carries O-linked (GalNAc...) threonine glycosylation. The interaction with ARHGEF5 stretch occupies residues 127-129 (MPS). Residues Thr208, Thr248, and Thr271 are each glycosylated (O-linked (GalNAc...) threonine).

It belongs to the ODAM family. As to quaternary structure, interacts (via C-terminus) with ARHGEF5. In terms of processing, O-glycosylated.

It is found in the secreted. Its subcellular location is the cytoplasm. The protein localises to the nucleus. Tooth-associated epithelia protein that probably plays a role in odontogenesis, the complex process that results in the initiation and generation of the tooth. May be incorporated in the enamel matrix at the end of mineralization process. Involved in the induction of RHOA activity via interaction with ARHGEF and expression of downstream factors such as ROCK. Plays a role in attachment of the junctional epithelium to the tooth surface. The polypeptide is Odontogenic ameloblast-associated protein (ODAM) (Bos taurus (Bovine)).